Consider the following 61-residue polypeptide: Photosystem II reaction center protein K (61 aa).

A propeptide spanning residues 1-24 (MLNTFSLIGICLNSTLFSSSFFFG) is cleaved from the precursor. The helical transmembrane segment at 36–56 (IVDIMPVIPLFFFLLAFVWQA) threads the bilayer.

The protein belongs to the PsbK family. As to quaternary structure, PSII is composed of 1 copy each of membrane proteins PsbA, PsbB, PsbC, PsbD, PsbE, PsbF, PsbH, PsbI, PsbJ, PsbK, PsbL, PsbM, PsbT, PsbX, PsbY, PsbZ, Psb30/Ycf12, at least 3 peripheral proteins of the oxygen-evolving complex and a large number of cofactors. It forms dimeric complexes.

It localises to the plastid. It is found in the chloroplast thylakoid membrane. One of the components of the core complex of photosystem II (PSII). PSII is a light-driven water:plastoquinone oxidoreductase that uses light energy to abstract electrons from H(2)O, generating O(2) and a proton gradient subsequently used for ATP formation. It consists of a core antenna complex that captures photons, and an electron transfer chain that converts photonic excitation into a charge separation. This Nicotiana tomentosiformis (Tobacco) protein is Photosystem II reaction center protein K.